The sequence spans 210 residues: Thymidylate kinase (210 aa).

10-17 (GPEGAGKS) contacts ATP.

This sequence belongs to the thymidylate kinase family.

It catalyses the reaction dTMP + ATP = dTDP + ADP. Phosphorylation of dTMP to form dTDP in both de novo and salvage pathways of dTTP synthesis. This chain is Thymidylate kinase, found in Pseudomonas syringae pv. tomato (strain ATCC BAA-871 / DC3000).